The chain runs to 195 residues: Nucleoside triphosphate pyrophosphatase (195 aa).

The active-site Proton acceptor is the aspartate 76.

It belongs to the Maf family. Requires a divalent metal cation as cofactor.

Its subcellular location is the cytoplasm. It catalyses the reaction a ribonucleoside 5'-triphosphate + H2O = a ribonucleoside 5'-phosphate + diphosphate + H(+). It carries out the reaction a 2'-deoxyribonucleoside 5'-triphosphate + H2O = a 2'-deoxyribonucleoside 5'-phosphate + diphosphate + H(+). In terms of biological role, nucleoside triphosphate pyrophosphatase. May have a dual role in cell division arrest and in preventing the incorporation of modified nucleotides into cellular nucleic acids. This is Nucleoside triphosphate pyrophosphatase from Pelagibacter ubique (strain HTCC1062).